Reading from the N-terminus, the 292-residue chain is Ribonuclease Z (292 aa).

7 residues coordinate Zn(2+): histidine 60, histidine 62, aspartate 64, histidine 65, histidine 132, aspartate 200, and histidine 256. Residue aspartate 64 is the Proton acceptor of the active site.

The protein belongs to the RNase Z family. Homodimer. The cofactor is Zn(2+).

It catalyses the reaction Endonucleolytic cleavage of RNA, removing extra 3' nucleotides from tRNA precursor, generating 3' termini of tRNAs. A 3'-hydroxy group is left at the tRNA terminus and a 5'-phosphoryl group is left at the trailer molecule.. In terms of biological role, zinc phosphodiesterase, which displays some tRNA 3'-processing endonuclease activity. Probably involved in tRNA maturation, by removing a 3'-trailer from precursor tRNA. This chain is Ribonuclease Z, found in Sulfolobus acidocaldarius (strain ATCC 33909 / DSM 639 / JCM 8929 / NBRC 15157 / NCIMB 11770).